We begin with the raw amino-acid sequence, 271 residues long: tRNA (guanine-N(7)-)-methyltransferase (271 aa).

A disordered region spans residues 1–52 (MSDSHHTPEAASASLRHVRAKGEPRFPDGPKADPAGSHFERRIRSFQPRRSR). Over residues 20 to 31 (AKGEPRFPDGPK) the composition is skewed to basic and acidic residues. S-adenosyl-L-methionine-binding residues include glutamate 93, aspartate 118, aspartate 145, and aspartate 168. The active site involves aspartate 168. Substrate contacts are provided by residues lysine 172, aspartate 204, and 241-244 (TRFE).

This sequence belongs to the class I-like SAM-binding methyltransferase superfamily. TrmB family.

It carries out the reaction guanosine(46) in tRNA + S-adenosyl-L-methionine = N(7)-methylguanosine(46) in tRNA + S-adenosyl-L-homocysteine. It participates in tRNA modification; N(7)-methylguanine-tRNA biosynthesis. Catalyzes the formation of N(7)-methylguanine at position 46 (m7G46) in tRNA. This chain is tRNA (guanine-N(7)-)-methyltransferase, found in Streptomyces coelicolor (strain ATCC BAA-471 / A3(2) / M145).